A 207-amino-acid chain; its full sequence is Uracil phosphoribosyltransferase (207 aa).

5-phospho-alpha-D-ribose 1-diphosphate-binding positions include Arg77, Arg102, and 129 to 137 (DPMLATGGS). Residues Ile192 and 197–199 (GDA) each bind uracil. Asp198 contributes to the 5-phospho-alpha-D-ribose 1-diphosphate binding site.

The protein belongs to the UPRTase family. Mg(2+) is required as a cofactor.

The catalysed reaction is UMP + diphosphate = 5-phospho-alpha-D-ribose 1-diphosphate + uracil. It functions in the pathway pyrimidine metabolism; UMP biosynthesis via salvage pathway; UMP from uracil: step 1/1. Allosterically activated by GTP. In terms of biological role, catalyzes the conversion of uracil and 5-phospho-alpha-D-ribose 1-diphosphate (PRPP) to UMP and diphosphate. The polypeptide is Uracil phosphoribosyltransferase (Mesoplasma florum (strain ATCC 33453 / NBRC 100688 / NCTC 11704 / L1) (Acholeplasma florum)).